A 414-amino-acid chain; its full sequence is Esterase FrsA (414 aa).

It belongs to the FrsA family.

The enzyme catalyses a carboxylic ester + H2O = an alcohol + a carboxylate + H(+). In terms of biological role, catalyzes the hydrolysis of esters. In Shigella flexneri serotype 5b (strain 8401), this protein is Esterase FrsA.